The sequence spans 718 residues: Gephyrin (718 aa).

A compositionally biased stretch (polar residues) spans 1–19 (MSNTLTTERNITNSPTAAQ). The interval 1 to 26 (MSNTLTTERNITNSPTAAQLNEKESG) is disordered. Positions 31 to 176 (EWIVGVLTTS…LPGSVKAIRE (146 aa)) are MPT Mo-transferase. A compositionally biased stretch (low complexity) spans 222 to 244 (NQNNQNNNNNNNNNNNNNNNNNS). 2 disordered regions span residues 222 to 266 (NQNN…SSYN) and 344 to 364 (TGEN…NDDD). A compositionally biased stretch (basic residues) spans 245–254 (HNHHHHHHHS). The segment at 260–718 (KRGSSYNMTP…KAILIGPINN (459 aa)) is MPT adenylyltransferase.

The protein in the N-terminal section; belongs to the MoaB/Mog family. It in the C-terminal section; belongs to the MoeA family. As to quaternary structure, homotrimer, homodimer and homooligomer. The cofactor is Mg(2+).

The protein resides in the cell membrane. It is found in the cytoplasm. Its subcellular location is the cytosol. The protein localises to the cytoskeleton. The enzyme catalyses molybdopterin + ATP + H(+) = adenylyl-molybdopterin + diphosphate. It carries out the reaction adenylyl-molybdopterin + molybdate = Mo-molybdopterin + AMP + H(+). It functions in the pathway cofactor biosynthesis; molybdopterin biosynthesis. Its function is as follows. Microtubule-associated protein involved in membrane protein-cytoskeleton interactions. Functionally, also has a catalytic activity and catalyzes two steps in the biosynthesis of the molybdenum cofactor. In the first step, molybdopterin is adenylated. Subsequently, molybdate is inserted into adenylated molybdopterin and AMP is released. In Dictyostelium discoideum (Social amoeba), this protein is Gephyrin (gphn).